The chain runs to 639 residues: Chaperone protein DnaK (639 aa).

Residue threonine 196 is modified to Phosphothreonine; by autocatalysis. The interval 592–639 is disordered; that stretch reads ASSLYQTPDAGAPGASGPSAGGEPETGKKGGDGEVQNAEYEVIDGNDK. Positions 601-613 are enriched in low complexity; it reads AGAPGASGPSAGG.

This sequence belongs to the heat shock protein 70 family.

Acts as a chaperone. This chain is Chaperone protein DnaK, found in Chlorobium limicola (strain DSM 245 / NBRC 103803 / 6330).